Here is a 537-residue protein sequence, read N- to C-terminus: Leucine-rich repeat LGI family member 4 (537 aa).

An N-terminal signal peptide occupies residues 1 to 19; it reads MGGAGILLLLLAGAGVVVA. LRR repeat units lie at residues 53–74, 77–98, 101–122, and 125–146; these read TLLS…SFLR, SLHL…AFAG, HLQY…ALRG, and SLTH…LFRG. An LRRCT domain is found at 158-208; it reads NPFQCDCRVLWLLQWMPTVNASVGTGACAGPASLSHMQLHHLDPKTFKCRA. N-linked (GlcNAc...) asparagine glycosylation is present at Asn177. EAR repeat units lie at residues 210-252, 256-298, 302-349, 351-394, 396-439, 441-483, and 487-532; these read ELSW…SWDY, RFRP…ARPS, RLAP…CRDG, GFYP…HWTG, RFER…RWDG, MFRL…RLEP, and LLEP…QHHE.

Can bind to ADAM11, ADAM22 and ADAM23. In terms of tissue distribution, widely expressed, with highest expression in brain.

It localises to the secreted. Its function is as follows. Component of Schwann cell signaling pathway(s) that controls axon segregation and myelin formation. The protein is Leucine-rich repeat LGI family member 4 (LGI4) of Homo sapiens (Human).